Consider the following 244-residue polypeptide: Lectin (244 aa).

The disordered stretch occupies residues 1-20 (TETETTSFSIPKTDQPSSPK).

The protein belongs to the leguminous lectin family. Homodimer. In contrast to other Lathyrus lectins which are tetramer of two alpha and two beta chains.

This Lathyrus sphaericus (Spring vetchling) protein is Lectin.